A 37-amino-acid chain; its full sequence is Potassium channel toxin alpha-KTx 11.2 (37 aa).

3 disulfides stabilise this stretch: Cys8-Cys27, Cys13-Cys33, and Cys17-Cys35.

This sequence belongs to the short scorpion toxin superfamily. Potassium channel inhibitor family. Alpha-KTx 11 subfamily. Expressed by the venom gland.

The protein resides in the secreted. Its function is as follows. Binds and inhibits voltage-sensitive potassium channels. Inhibits the vertebrate potassium channel Kv1.1/KCNA1 with low affinity. The chain is Potassium channel toxin alpha-KTx 11.2 from Parabuthus villosus (Black hairy thick-tailed scorpion).